Consider the following 533-residue polypeptide: Ribonuclease III domain-containing protein RNC1, chloroplastic (533 aa).

The N-terminal 30 residues, methionine 1–arginine 30, are a transit peptide targeting the chloroplast. Disordered regions lie at residues valine 31–serine 57 and arginine 66–proline 85. A compositionally biased stretch (pro residues) spans threonine 39–alanine 53. The span at alanine 69–isoleucine 82 shows a compositional bias: basic residues. RNase III domains follow at residues leucine 164–glycine 279 and glutamate 411–glycine 511.

As to quaternary structure, interacts with RNA. Part of large ribonucleo-protein particles that contain CAF1 and/or CAF2.

Its subcellular location is the plastid. It is found in the chloroplast. Binds specific group II introns in chloroplasts and facilitates their splicing. Acts on both subgroup IIA and subgroup IIB introns. The substrates of the subgroup II also require the CRM domain proteins CAF1 or CAF2. Binds both single-stranded and double-stranded RNA non-specifically, but lacks endonuclease activity. Required for plastid ribosome biogenesis. This chain is Ribonuclease III domain-containing protein RNC1, chloroplastic, found in Oryza sativa subsp. japonica (Rice).